Reading from the N-terminus, the 337-residue chain is DNA-directed RNA polymerase subunit alpha (337 aa).

An alpha N-terminal domain (alpha-NTD) region spans residues 1 to 233; that stretch reads MIQKNWQELI…DQLSLFVNFE (233 aa). The interval 249-337 is alpha C-terminal domain (alpha-CTD); that stretch reads FNPALLKKVD…DLAKRYEDQY (89 aa).

This sequence belongs to the RNA polymerase alpha chain family. As to quaternary structure, homodimer. The RNAP catalytic core consists of 2 alpha, 1 beta, 1 beta' and 1 omega subunit. When a sigma factor is associated with the core the holoenzyme is formed, which can initiate transcription.

The enzyme catalyses RNA(n) + a ribonucleoside 5'-triphosphate = RNA(n+1) + diphosphate. In terms of biological role, DNA-dependent RNA polymerase catalyzes the transcription of DNA into RNA using the four ribonucleoside triphosphates as substrates. This is DNA-directed RNA polymerase subunit alpha from Bartonella quintana (strain Toulouse) (Rochalimaea quintana).